Here is a 448-residue protein sequence, read N- to C-terminus: Lipoamide acyltransferase component of branched-chain alpha-keto acid dehydrogenase complex, mitochondrial (448 aa).

The 76-residue stretch at 30–105 (VVQFKLSDIG…RVGQALIDVE (76 aa)) folds into the Lipoyl-binding domain. Lysine 71 is modified (N6-lipoyllysine). Disordered regions lie at residues 108–146 (GNVE…GKVL) and 191–211 (TSGS…SKSY). Low complexity predominate over residues 121-136 (ASSSPEAPKSSAPKAP). One can recognise a Peripheral subunit-binding (PSBD) domain in the interval 146-183 (LATPAVRRIAIENKIKLAEVRGTGKDGRVLKEDVLKFL). Residues 191-210 (TSGSTNIRTTHQAPQPSSKS) show a composition bias toward polar residues. CoA is bound by residues arginine 257, serine 272, aspartate 315, serine 365, asparagine 366, glycine 390, and isoleucine 392. Residues histidine 418 and aspartate 422 contribute to the active site.

It belongs to the 2-oxoacid dehydrogenase family. The cofactor is (R)-lipoate. In terms of tissue distribution, ubiquitously expressed.

Its subcellular location is the mitochondrion matrix. It localises to the cytoplasm. The protein localises to the cytosol. The protein resides in the cell projection. It is found in the dendrite. Its subcellular location is the cilium. It catalyses the reaction N(6)-[(R)-dihydrolipoyl]-L-lysyl-[protein] + 2-methylpropanoyl-CoA = N(6)-[(R)-S(8)-2-methylpropanoyldihydrolipoyl]-L-lysyl-[protein] + CoA. The branched-chain alpha-keto dehydrogenase complex catalyzes the overall conversion of alpha-keto acids to acyl-CoA and CO(2). It contains multiple copies of three enzymatic components: branched-chain alpha-keto acid decarboxylase (E1), lipoamide acyltransferase (E2) and lipoamide dehydrogenase (E3). Within this complex, the catalytic function of this enzyme is to accept, and to transfer to coenzyme A, acyl groups that are generated by the branched-chain alpha-keto acid decarboxylase component. Required for the catabolism of branched-chain amino acids and the subsequent synthesis of monomethyl branched-chain fatty acids, which are important for regulating postembryonic growth. In Caenorhabditis elegans, this protein is Lipoamide acyltransferase component of branched-chain alpha-keto acid dehydrogenase complex, mitochondrial.